The following is a 308-amino-acid chain: 3'(2'),5'-bisphosphate nucleotidase 1 (308 aa).

Ala-2 carries the post-translational modification N-acetylalanine. Asp-51 serves as the catalytic Proton acceptor. Residues Glu-74, Asp-117, Leu-119, and Asp-120 each contribute to the Mg(2+) site. Thr-122 (proton acceptor) is an active-site residue. Position 122 is a phosphothreonine (Thr-122). Residues Thr-195, His-198, Gly-220, and Lys-224 each coordinate AMP. Ser-240 bears the Phosphoserine mark. N6-succinyllysine is present on Lys-244. Asp-247 lines the Mg(2+) pocket.

This sequence belongs to the inositol monophosphatase superfamily. Requires Mg(2+) as cofactor. Widely expressed. Highly expressed in kidney.

It carries out the reaction adenosine 3',5'-bisphosphate + H2O = AMP + phosphate. The catalysed reaction is adenosine 2',5'-bisphosphate + H2O = AMP + phosphate. The enzyme catalyses 3'-phosphoadenylyl sulfate + H2O = adenosine 5'-phosphosulfate + phosphate. It catalyses the reaction 1D-myo-inositol 1,4-bisphosphate + H2O = 1D-myo-inositol 4-phosphate + phosphate. It carries out the reaction 1D-myo-inositol 1,3,4-trisphosphate + H2O = 1D-myo-inositol 3,4-bisphosphate + phosphate. With respect to regulation, uncompetitively inhibited by Li(+) (IC(50)=157 uM). PAP hydrolysis is competitively inhibited by PAPS (IC(50)=0.7 uM) and by inositol 1,4-bisphosphate (IC(50)=15 uM). Its function is as follows. Phosphatase that converts 3'(2')-phosphoadenosine 5'-phosphate (PAP) to AMP and adenosine 3'-phosphate 5'-phosphosulfate (PAPS) to adenosine 5'-phosphosulfate (APS). Is also able to hydrolyze inositol 1,4-bisphosphate (Ins(1,4)P2) and inositol 1,3,4-trisphosphate (Ins(1,3,4)P3), and is not active on Ins(1)P, Ins(4)P, Ins(3,4)P2, Ins(1,4,5)P3, Ins(1,3,4,5)P4, Ins(1,3,4,5,6)P5 or InsP6. Probably prevents the toxic accumulation of PAP, a compound which inhibits a variety of proteins, including PAPS-utilizing enzymes such as sulfotransferases, and RNA processing enzymes. Could also play a role in inositol recycling and phosphoinositide metabolism. The polypeptide is 3'(2'),5'-bisphosphate nucleotidase 1 (Bpnt1) (Mus musculus (Mouse)).